We begin with the raw amino-acid sequence, 957 residues long: Glycine dehydrogenase (decarboxylating) (957 aa).

The residue at position 708 (Lys708) is an N6-(pyridoxal phosphate)lysine.

The protein belongs to the GcvP family. In terms of assembly, the glycine cleavage system is composed of four proteins: P, T, L and H. Pyridoxal 5'-phosphate is required as a cofactor.

It catalyses the reaction N(6)-[(R)-lipoyl]-L-lysyl-[glycine-cleavage complex H protein] + glycine + H(+) = N(6)-[(R)-S(8)-aminomethyldihydrolipoyl]-L-lysyl-[glycine-cleavage complex H protein] + CO2. Its function is as follows. The glycine cleavage system catalyzes the degradation of glycine. The P protein binds the alpha-amino group of glycine through its pyridoxal phosphate cofactor; CO(2) is released and the remaining methylamine moiety is then transferred to the lipoamide cofactor of the H protein. This is Glycine dehydrogenase (decarboxylating) from Shigella sonnei (strain Ss046).